The sequence spans 195 residues: Imidazoleglycerol-phosphate dehydratase (195 aa).

Belongs to the imidazoleglycerol-phosphate dehydratase family.

The protein resides in the cytoplasm. It carries out the reaction D-erythro-1-(imidazol-4-yl)glycerol 3-phosphate = 3-(imidazol-4-yl)-2-oxopropyl phosphate + H2O. The protein operates within amino-acid biosynthesis; L-histidine biosynthesis; L-histidine from 5-phospho-alpha-D-ribose 1-diphosphate: step 6/9. The sequence is that of Imidazoleglycerol-phosphate dehydratase from Pelobacter propionicus (strain DSM 2379 / NBRC 103807 / OttBd1).